The sequence spans 585 residues: Zinc finger protein 732 (585 aa).

A KRAB domain is found at 4–75 (LTFRDVAIEF…KIHETVAKHP (72 aa)). The C2H2-type 1; degenerate zinc-finger motif lies at 141 to 163 (FQCNVHVKVFSTFSNSNQRRIRH). The C2H2-type 2; degenerate zinc-finger motif lies at 167–189 (KHFKECGKSFQKFSDLTQHQGIH). Residues 195–217 (YTCEECGKDFKWYLIFNEYEIIH) form a C2H2-type 3; degenerate zinc finger. The C2H2-type 4 zinc-finger motif lies at 223–244 (FTCEECGNIFTTSSNFAKHKVH). The C2H2-type 5; degenerate zinc finger occupies 250–272 (YKYEECGKAFNRSSTLTKHKRIH). 9 C2H2-type zinc fingers span residues 278 to 300 (FTCE…KKIH), 306 to 328 (YKCQ…NRIH), 334 to 356 (YTCE…KRIH), 362 to 384 (YKCE…KSIH), 390 to 412 (YTCE…KRIH), 418 to 440 (HKCE…KIIH), 446 to 468 (YKCE…KKIH), 474 to 496 (YRCE…KTIH), and 502 to 524 (YECE…KKIH). The C2H2-type 15; degenerate zinc finger occupies 530–552 (YRCEECGKAFRRSRVLNKYKTIH). The C2H2-type 16; degenerate zinc finger occupies 558-580 (PKCKGCGKAFKWSSYLNQHNKIY).

It belongs to the krueppel C2H2-type zinc-finger protein family.

Its subcellular location is the nucleus. May be involved in transcriptional regulation. This Homo sapiens (Human) protein is Zinc finger protein 732 (ZNF732).